We begin with the raw amino-acid sequence, 192 residues long: Adenylate kinase (192 aa).

10–18 contacts ATP; it reads GVPGVGGTT.

It belongs to the archaeal adenylate kinase family. Monomer.

It localises to the cytoplasm. The catalysed reaction is AMP + ATP = 2 ADP. The protein is Adenylate kinase (adkA) of Methanothermococcus thermolithotrophicus (Methanococcus thermolithotrophicus).